Consider the following 512-residue polypeptide: GMP synthase [glutamine-hydrolyzing] (512 aa).

Residues Thr-7–Gly-197 form the Glutamine amidotransferase type-1 domain. Cys-84 serves as the catalytic Nucleophile. Catalysis depends on residues His-171 and Glu-173. The GMPS ATP-PPase domain maps to Trp-198 to Arg-387. Position 225–231 (Ser-225–Ser-231) interacts with ATP.

As to quaternary structure, homodimer.

The catalysed reaction is XMP + L-glutamine + ATP + H2O = GMP + L-glutamate + AMP + diphosphate + 2 H(+). Its pathway is purine metabolism; GMP biosynthesis; GMP from XMP (L-Gln route): step 1/1. Catalyzes the synthesis of GMP from XMP. This Bacillus mycoides (strain KBAB4) (Bacillus weihenstephanensis) protein is GMP synthase [glutamine-hydrolyzing].